The chain runs to 395 residues: Sensor protein DltS (395 aa).

Transmembrane regions (helical) follow at residues 9–29 (FVFL…AVSN) and 136–156 (FLIL…SLYL). Positions 177–387 (DASHELKTPI…RLEVQLPIDG (211 aa)) constitute a Histidine kinase domain. His-180 carries the post-translational modification Phosphohistidine; by autocatalysis.

Its subcellular location is the cell membrane. The enzyme catalyses ATP + protein L-histidine = ADP + protein N-phospho-L-histidine.. In terms of biological role, member of the two-component regulatory system DltS/DltR. Regulates the expression of the dlt operon. Probably phosphorylates DltR. This is Sensor protein DltS (dltS) from Streptococcus agalactiae serotype III (strain NEM316).